The sequence spans 284 residues: Nucleotide-binding protein Sbal223_0704 (284 aa).

8–15 (GRSGSGKS) is a binding site for ATP. 56 to 59 (DVRN) serves as a coordination point for GTP.

The protein belongs to the RapZ-like family.

Displays ATPase and GTPase activities. This chain is Nucleotide-binding protein Sbal223_0704, found in Shewanella baltica (strain OS223).